The sequence spans 388 residues: Succinate--CoA ligase [ADP-forming] subunit beta (388 aa).

An ATP-grasp domain is found at 9–244; sequence KEILRKFGVA…LDEEDPAEIE (236 aa). Residues lysine 46, 53–55, glutamate 99, alanine 102, and glutamate 107 contribute to the ATP site; that span reads GRG. Residues asparagine 199 and aspartate 213 each coordinate Mg(2+). Residues asparagine 264 and 321–323 each bind substrate; that span reads GIM.

The protein belongs to the succinate/malate CoA ligase beta subunit family. In terms of assembly, heterotetramer of two alpha and two beta subunits. Mg(2+) serves as cofactor.

It catalyses the reaction succinate + ATP + CoA = succinyl-CoA + ADP + phosphate. The catalysed reaction is GTP + succinate + CoA = succinyl-CoA + GDP + phosphate. The protein operates within carbohydrate metabolism; tricarboxylic acid cycle; succinate from succinyl-CoA (ligase route): step 1/1. Functionally, succinyl-CoA synthetase functions in the citric acid cycle (TCA), coupling the hydrolysis of succinyl-CoA to the synthesis of either ATP or GTP and thus represents the only step of substrate-level phosphorylation in the TCA. The beta subunit provides nucleotide specificity of the enzyme and binds the substrate succinate, while the binding sites for coenzyme A and phosphate are found in the alpha subunit. This Burkholderia cenocepacia (strain HI2424) protein is Succinate--CoA ligase [ADP-forming] subunit beta.